The primary structure comprises 480 residues: ESX-1 secretion system ATPase EccB1 (480 aa).

A helical transmembrane segment spans residues 44–64 (IALGIVVAVLILAGAALLAYF). The segment at 461–480 (DTLPADPSPRKVPAGASGAP) is disordered.

The protein belongs to the EccB family. As to quaternary structure, part of the ESX-1 / type VII secretion system (T7SS), which is composed of cytosolic and membrane components. The ESX-1 membrane complex is composed of EccB1, EccCa1, EccCb1, EccD1 and EccE1.

The protein localises to the cell inner membrane. In terms of biological role, an ATPase. Part of the ESX-1 specialized secretion system, which delivers several virulence factors to host cells during infection, including the key virulence factors EsxA (ESAT-6) and EsxB (CFP-10). The protein is ESX-1 secretion system ATPase EccB1 of Mycobacterium tuberculosis (strain CDC 1551 / Oshkosh).